Here is a 571-residue protein sequence, read N- to C-terminus: Translation initiation factor IF-2 (571 aa).

The tr-type G domain occupies 71–239 (RRPPVVVIMG…ILLLAELEDY (169 aa)). The interval 80–87 (GHVDHGKT) is G1. Position 80–87 (80–87 (GHVDHGKT)) interacts with GTP. Residues 105-109 (GITQH) form a G2 region. A G3 region spans residues 126–129 (DTPG). GTP-binding positions include 126 to 130 (DTPGH) and 180 to 183 (NKID). Residues 180–183 (NKID) are G4. Positions 216 to 218 (SAK) are G5.

Belongs to the TRAFAC class translation factor GTPase superfamily. Classic translation factor GTPase family. IF-2 subfamily.

The protein resides in the cytoplasm. Its function is as follows. One of the essential components for the initiation of protein synthesis. Protects formylmethionyl-tRNA from spontaneous hydrolysis and promotes its binding to the 30S ribosomal subunits. Also involved in the hydrolysis of GTP during the formation of the 70S ribosomal complex. The sequence is that of Translation initiation factor IF-2 from Thermus thermophilus (strain ATCC BAA-163 / DSM 7039 / HB27).